We begin with the raw amino-acid sequence, 469 residues long: Argininosuccinate lyase (469 aa).

It belongs to the lyase 1 family. Argininosuccinate lyase subfamily.

Its subcellular location is the cytoplasm. The catalysed reaction is 2-(N(omega)-L-arginino)succinate = fumarate + L-arginine. Its pathway is amino-acid biosynthesis; L-arginine biosynthesis; L-arginine from L-ornithine and carbamoyl phosphate: step 3/3. The protein is Argininosuccinate lyase of Cupriavidus metallidurans (strain ATCC 43123 / DSM 2839 / NBRC 102507 / CH34) (Ralstonia metallidurans).